Reading from the N-terminus, the 235-residue chain is Orotidine 5'-phosphate decarboxylase (235 aa).

Residues aspartate 10, lysine 32, 59 to 68 (DLKLHDIPNT), threonine 123, arginine 184, glutamine 193, glycine 213, and arginine 214 contribute to the substrate site. The active-site Proton donor is the lysine 61.

It belongs to the OMP decarboxylase family. Type 1 subfamily. As to quaternary structure, homodimer.

It catalyses the reaction orotidine 5'-phosphate + H(+) = UMP + CO2. Its pathway is pyrimidine metabolism; UMP biosynthesis via de novo pathway; UMP from orotate: step 2/2. In terms of biological role, catalyzes the decarboxylation of orotidine 5'-monophosphate (OMP) to uridine 5'-monophosphate (UMP). This Paramagnetospirillum magneticum (strain ATCC 700264 / AMB-1) (Magnetospirillum magneticum) protein is Orotidine 5'-phosphate decarboxylase.